A 245-amino-acid polypeptide reads, in one-letter code: Uridylate kinase (245 aa).

12 to 15 is a binding site for ATP; it reads KLSG. The involved in allosteric activation by GTP stretch occupies residues 20-25; sequence GERGVG. Residue Gly54 participates in UMP binding. Gly55 and Arg59 together coordinate ATP. UMP is bound by residues Asp74 and 135 to 142; that span reads IGSPYFST. Residues Asn163, Tyr169, and Asp172 each contribute to the ATP site.

It belongs to the UMP kinase family. Homohexamer.

The protein resides in the cytoplasm. It catalyses the reaction UMP + ATP = UDP + ADP. Its pathway is pyrimidine metabolism; CTP biosynthesis via de novo pathway; UDP from UMP (UMPK route): step 1/1. Allosterically activated by GTP. Inhibited by UTP. Catalyzes the reversible phosphorylation of UMP to UDP. The chain is Uridylate kinase from Streptococcus pneumoniae serotype 2 (strain D39 / NCTC 7466).